Reading from the N-terminus, the 206-residue chain is Recombination protein RecR (206 aa).

The segment at 58 to 73 adopts a C4-type zinc-finger fold; the sequence is CENCHNISDVAVCEIC. Residues 81 to 176 enclose the Toprim domain; sequence QIVCVVEDVR…ITSSIARGIS (96 aa).

The protein belongs to the RecR family.

Its function is as follows. May play a role in DNA repair. It seems to be involved in an RecBC-independent recombinational process of DNA repair. It may act with RecF and RecO. The sequence is that of Recombination protein RecR from Flavobacterium psychrophilum (strain ATCC 49511 / DSM 21280 / CIP 103535 / JIP02/86).